We begin with the raw amino-acid sequence, 75 residues long: RNA-binding protein Hfq (75 aa).

The region spanning 9-69 (DQFLNQLRKE…ISTFAPERNI (61 aa)) is the Sm domain.

The protein belongs to the Hfq family. As to quaternary structure, homohexamer.

Functionally, RNA chaperone that binds small regulatory RNA (sRNAs) and mRNAs to facilitate mRNA translational regulation in response to envelope stress, environmental stress and changes in metabolite concentrations. Also binds with high specificity to tRNAs. The chain is RNA-binding protein Hfq from Geobacillus kaustophilus (strain HTA426).